The primary structure comprises 115 residues: MRSAKLKFEKRRSRIRHKISKTSNRVRLSIFKSGRHIYAQIIDDSKSITIAAASTLDEKRKKSHCNIEHAIKVGEEIAKKAYAAGIKDVVFDRGGYKYHGVVKALADAAREKIKF.

The protein belongs to the universal ribosomal protein uL18 family. As to quaternary structure, part of the 50S ribosomal subunit; part of the 5S rRNA/L5/L18/L25 subcomplex. Contacts the 5S and 23S rRNAs.

In terms of biological role, this is one of the proteins that bind and probably mediate the attachment of the 5S RNA into the large ribosomal subunit, where it forms part of the central protuberance. This chain is Large ribosomal subunit protein uL18, found in Rickettsia rickettsii (strain Iowa).